The following is a 760-amino-acid chain: Catalase-peroxidase (760 aa).

The segment at 1-22 (MSQGECPVKKVPNVAGSGTRNT) is disordered. Positions 93-242 (WHSAGTYRVT…LAAAHMGLIY (150 aa)) form a cross-link, tryptophyl-tyrosyl-methioninium (Trp-Tyr) (with M-268). The Proton acceptor role is filled by H94. Residues 206–226 (KGEGIMDGDQHKTDKSEPHTS) are disordered. The span at 213–226 (GDQHKTDKSEPHTS) shows a compositional bias: basic and acidic residues. The segment at residues 242 to 268 (YVNPEGPEGIPDPVAAAHDIRTTFGRM) is a cross-link (tryptophyl-tyrosyl-methioninium (Tyr-Met) (with W-93)). Residue H283 participates in heme b binding.

It belongs to the peroxidase family. Peroxidase/catalase subfamily. As to quaternary structure, homodimer or homotetramer. The cofactor is heme b. Formation of the three residue Trp-Tyr-Met cross-link is important for the catalase, but not the peroxidase activity of the enzyme.

It is found in the cytoplasm. It carries out the reaction H2O2 + AH2 = A + 2 H2O. The catalysed reaction is 2 H2O2 = O2 + 2 H2O. In terms of biological role, bifunctional enzyme with both catalase and broad-spectrum peroxidase activity. The chain is Catalase-peroxidase from Pyrenophora tritici-repentis (strain Pt-1C-BFP) (Wheat tan spot fungus).